The following is a 579-amino-acid chain: Arginine--tRNA ligase (579 aa).

Positions 136 to 146 (ANPTGPLHIGH) match the 'HIGH' region motif.

It belongs to the class-I aminoacyl-tRNA synthetase family. In terms of assembly, monomer.

It localises to the cytoplasm. It carries out the reaction tRNA(Arg) + L-arginine + ATP = L-arginyl-tRNA(Arg) + AMP + diphosphate. In Anaplasma marginale (strain St. Maries), this protein is Arginine--tRNA ligase.